A 290-amino-acid chain; its full sequence is Probable ATP-dependent kinase TDA10 (290 aa).

38-45 provides a ligand contact to ATP; the sequence is GPQGSGKS.

The protein belongs to the GLYK kinase family.

Its subcellular location is the cytoplasm. It is found in the nucleus. Its function is as follows. ATP-dependent kinase whose specificity is not yet known. The chain is Probable ATP-dependent kinase TDA10 (TDA10) from Saccharomyces cerevisiae (strain ATCC 204508 / S288c) (Baker's yeast).